The sequence spans 146 residues: Angiogenin (146 aa).

The first 24 residues, 1–24 (MVMGLGLFLLVFMLGLGLTPPTLA), serve as a signal peptide directing secretion. A Pyrrolidone carboxylic acid modification is found at glutamine 25. Histidine 37 acts as the Proton acceptor in catalysis. Arginine 45 contacts tRNA. 3 cysteine pairs are disulfide-bonded: cysteine 50/cysteine 105, cysteine 63/cysteine 116, and cysteine 81/cysteine 131. The Nucleolar localization signal signature appears at 55-59 (RRRHL). The tRNA site is built by cysteine 105 and isoleucine 127. Histidine 138 functions as the Proton donor in the catalytic mechanism.

It belongs to the pancreatic ribonuclease family. As to quaternary structure, homodimer. Interacts with RNH1; inhibiting ANG ribonuclease activity. Interacts with PCNA.

It is found in the secreted. It localises to the nucleus. The protein resides in the nucleolus. The protein localises to the cytoplasm. Its subcellular location is the stress granule. Has weak tRNA ribonuclease activity by itself due to partial autoinhibition by its C-terminus, which folds into a short alpha-helix that partially occludes the substrate-binding site. In absence of stress, the ribonuclease activity is inhibited by RNH1 in the cytoplasm. In response to stress, dissociates from RNH1 in the cytoplasm and associates with cytoplasmic ribosomes with vacant A-sites: ribosomes directly activate the tRNA ribonuclease activity of ANG by refolding the C-terminal alpha-helix. In response to stress, the angiogenic activity of ANG is inhibited by RNH1 in the nucleus. In terms of biological role, secreted ribonuclease that can either promote or restrict cell proliferation of target cells, depending on the context. Endocytosed in target cells via its receptor PLXNB2 and translocates to the cytoplasm or nucleus. Under stress conditions, localizes to the cytoplasm and promotes the assembly of stress granules (SGs): specifically cleaves a subset of tRNAs within anticodon loops to produce tRNA-derived stress-induced fragments (tiRNAs), resulting in translation repression and inhibition of cell proliferation. tiRNas also prevent formation of apoptosome, thereby promoting cell survival. Preferentially cleaves RNAs between a pyrimidine and an adenosine residue, suggesting that it cleaves the anticodon loop of tRNA(Ala) (32-UUAGCAU-38) after positions 33 and 36. Cleaves a subset of tRNAs, including tRNA(Ala), tRNA(Glu), tRNA(Gly), tRNA(Lys), tRNA(Val), tRNA(His), tRNA(Asp) and tRNA(Sec). Under growth conditions and in differentiated cells, translocates to the nucleus and stimulates ribosomal RNA (rRNA) transcription, including that containing the initiation site sequences of 45S rRNA, thereby promoting cell growth and proliferation. Angiogenin induces vascularization of normal and malignant tissues via its ability to promote rRNA transcription. Involved in hematopoietic stem and progenitor cell (HSPC) growth and survival by promoting rRNA transcription in growth conditions and inhibiting translation in response to stress, respectively. Mediates the crosstalk between myeloid and intestinal epithelial cells to protect the intestinal epithelial barrier integrity: secreted by myeloid cells and promotes intestinal epithelial cells proliferation and survival. Also mediates osteoclast-endothelial cell crosstalk in growing bone: produced by osteoclasts and protects the neighboring vascular cells against senescence by promoting rRNA transcription. The polypeptide is Angiogenin (ANG) (Macaca mulatta (Rhesus macaque)).